The primary structure comprises 143 residues: MELLVKRINKEAILPFYAHEGDAGLDLFSVEEVLIKPMERKLIATGIKIQLPPNTEGQVRPRSGLALAHGITLLNSPGTIDEGYRGEIKVLMINLGQEGFLIKKGMKIAQMVIKPIEQVLIKEVVELKDTERGEGGFGSTGTM.

Residues 62 to 64 (RSG), Asn-75, 79 to 81 (TID), and Lys-89 contribute to the substrate site.

This sequence belongs to the dUTPase family. The cofactor is Mg(2+).

It carries out the reaction dUTP + H2O = dUMP + diphosphate + H(+). It participates in pyrimidine metabolism; dUMP biosynthesis; dUMP from dCTP (dUTP route): step 2/2. In terms of biological role, this enzyme is involved in nucleotide metabolism: it produces dUMP, the immediate precursor of thymidine nucleotides and it decreases the intracellular concentration of dUTP so that uracil cannot be incorporated into DNA. In Clostridium kluyveri (strain ATCC 8527 / DSM 555 / NBRC 12016 / NCIMB 10680 / K1), this protein is Deoxyuridine 5'-triphosphate nucleotidohydrolase.